Consider the following 501-residue polypeptide: Lysine--tRNA ligase (501 aa).

Positions 402 and 409 each coordinate Mg(2+).

This sequence belongs to the class-II aminoacyl-tRNA synthetase family. As to quaternary structure, homodimer. It depends on Mg(2+) as a cofactor.

It is found in the cytoplasm. It carries out the reaction tRNA(Lys) + L-lysine + ATP = L-lysyl-tRNA(Lys) + AMP + diphosphate. The protein is Lysine--tRNA ligase (lysS) of Helicobacter pylori (strain J99 / ATCC 700824) (Campylobacter pylori J99).